The sequence spans 381 residues: Creatine kinase M-type (381 aa).

Positions 11-98 (KLNYKPEEEY…FDPIIQDRHG (88 aa)) constitute a Phosphagen kinase N-terminal domain. The region spanning 125–367 (YVLSSRVRTG…KLMVEMEKKL (243 aa)) is the Phosphagen kinase C-terminal domain. An ATP-binding site is contributed by 128–132 (SSRVR). Phosphoserine is present on serine 164. Threonine 166 is modified (phosphothreonine). A Phosphoserine modification is found at serine 178. Threonine 180 carries the phosphothreonine modification. Histidine 191 serves as a coordination point for ATP. Serine 199 is subject to Phosphoserine. ATP is bound by residues arginine 236 and arginine 292. Phosphothreonine is present on residues threonine 313 and threonine 322. ATP contacts are provided by residues 320–325 (RGTGGV) and aspartate 335. Serine 372 is subject to Phosphoserine.

This sequence belongs to the ATP:guanido phosphotransferase family. Dimer of identical or non-identical chains, which can be either B (brain type) or M (muscle type). With MM being the major form in skeletal muscle and myocardium, MB existing in myocardium, and BB existing in many tissues, especially brain.

Its subcellular location is the cytoplasm. The enzyme catalyses creatine + ATP = N-phosphocreatine + ADP + H(+). Functionally, reversibly catalyzes the transfer of phosphate between ATP and various phosphogens (e.g. creatine phosphate). Creatine kinase isoenzymes play a central role in energy transduction in tissues with large, fluctuating energy demands, such as skeletal muscle, heart, brain and spermatozoa. In Canis lupus familiaris (Dog), this protein is Creatine kinase M-type (CKM).